The sequence spans 84 residues: Small ribosomal subunit protein uS17 (84 aa).

It belongs to the universal ribosomal protein uS17 family. Part of the 30S ribosomal subunit.

In terms of biological role, one of the primary rRNA binding proteins, it binds specifically to the 5'-end of 16S ribosomal RNA. This is Small ribosomal subunit protein uS17 from Treponema pallidum (strain Nichols).